The sequence spans 74 residues: Large ribosomal subunit protein eL38B (74 aa).

It belongs to the eukaryotic ribosomal protein eL38 family. As to quaternary structure, component of the large ribosomal subunit (LSU). Mature yeast ribosomes consist of a small (40S) and a large (60S) subunit. The 40S small subunit contains 1 molecule of ribosomal RNA (18S rRNA) and at least 33 different proteins. The large 60S subunit contains 3 rRNA molecules (25S, 5.8S and 5S rRNA) and at least 46 different proteins.

It localises to the cytoplasm. In terms of biological role, component of the ribosome, a large ribonucleoprotein complex responsible for the synthesis of proteins in the cell. The small ribosomal subunit (SSU) binds messenger RNAs (mRNAs) and translates the encoded message by selecting cognate aminoacyl-transfer RNA (tRNA) molecules. The large subunit (LSU) contains the ribosomal catalytic site termed the peptidyl transferase center (PTC), which catalyzes the formation of peptide bonds, thereby polymerizing the amino acids delivered by tRNAs into a polypeptide chain. The nascent polypeptides leave the ribosome through a tunnel in the LSU and interact with protein factors that function in enzymatic processing, targeting, and the membrane insertion of nascent chains at the exit of the ribosomal tunnel. This Schizosaccharomyces pombe (strain 972 / ATCC 24843) (Fission yeast) protein is Large ribosomal subunit protein eL38B (rpl3802).